A 207-amino-acid polypeptide reads, in one-letter code: RNA chaperone ProQ (207 aa).

Residues 100–156 are disordered; that stretch reads TLAESKAKVQARRKEQAQKARDEEKSKPKTKKAPQQRRANKPQAQKPAKQPVETRAL. Positions 111-126 are enriched in basic and acidic residues; it reads RRKEQAQKARDEEKSK. A compositionally biased stretch (basic residues) spans 127–139; the sequence is PKTKKAPQQRRAN.

Belongs to the ProQ family.

It localises to the cytoplasm. Its function is as follows. RNA chaperone with significant RNA binding, RNA strand exchange and RNA duplexing activities. This Vibrio vulnificus (strain CMCP6) protein is RNA chaperone ProQ.